The sequence spans 94 residues: Protein canopy homolog 1 (94 aa).

Belongs to the canopy family.

The protein is Protein canopy homolog 1 (Cnpy1) of Mus musculus (Mouse).